A 163-amino-acid polypeptide reads, in one-letter code: MVVQIRIGQGMDVHAFEEGDHVTLAGIKIPHTHGLKAHSDGDVVLHALSDALLGALALGDIGQHFPDTDVQFKGADSRVLLKHVYQLILDRGYALNNADITVACERPKLAKYNLEMRQSIADVLDVDVTQISVKATTTEKLGFTGRQEGILATATVLVSYQAK.

A divalent metal cation-binding residues include Asp12 and His14. 4-CDP-2-C-methyl-D-erythritol 2-phosphate contacts are provided by residues 12 to 14 (DVH) and 38 to 39 (HS). His46 provides a ligand contact to a divalent metal cation. 4-CDP-2-C-methyl-D-erythritol 2-phosphate-binding positions include 60–62 (DIG), 65–69 (FPDTD), 136–139 (TTTE), Phe143, and Arg146.

It belongs to the IspF family. Homotrimer. Requires a divalent metal cation as cofactor.

It catalyses the reaction 4-CDP-2-C-methyl-D-erythritol 2-phosphate = 2-C-methyl-D-erythritol 2,4-cyclic diphosphate + CMP. Its pathway is isoprenoid biosynthesis; isopentenyl diphosphate biosynthesis via DXP pathway; isopentenyl diphosphate from 1-deoxy-D-xylulose 5-phosphate: step 4/6. Functionally, involved in the biosynthesis of isopentenyl diphosphate (IPP) and dimethylallyl diphosphate (DMAPP), two major building blocks of isoprenoid compounds. Catalyzes the conversion of 4-diphosphocytidyl-2-C-methyl-D-erythritol 2-phosphate (CDP-ME2P) to 2-C-methyl-D-erythritol 2,4-cyclodiphosphate (ME-CPP) with a corresponding release of cytidine 5-monophosphate (CMP). In Acinetobacter baylyi (strain ATCC 33305 / BD413 / ADP1), this protein is 2-C-methyl-D-erythritol 2,4-cyclodiphosphate synthase.